A 335-amino-acid polypeptide reads, in one-letter code: MTLPLLGPMSLSGFEHPWFFLFFLVVLGLVALYVIVQMGRHRRMLRFANMELLESVAPKRPSRWRHLPAVLLILSLMSFTVAMAGPTHDVRIPRNRAVVMLVIDVSQSMRATDVAPNRLVAAQEAAKQFADQLTPGINLGLIAYAGTATVLVSPTTNREATKAAIDKLQLADRTATGEGIFTALQAVATVGAVIGGGDEPPPARIVLMSDGKETVPSNPDNPKGAYTAARTAKDQGVPISTVSFGTPYGYVEINDQRQPVPVDDEMLKKIADLSGGDAFTASSLEQLKQVFTNLQEQIGYETIKGDASVGWLRIGSLVLALAALGALLINRRLPN.

Helical transmembrane passes span Trp-18 to Met-38 and Leu-67 to Thr-87. In terms of domain architecture, VWFA spans Val-98–Leu-294. Residues Val-309–Ile-329 form a helical membrane-spanning segment.

It belongs to the UPF0353 family.

The protein resides in the cell membrane. The chain is UPF0353 protein Mvan_2751 from Mycolicibacterium vanbaalenii (strain DSM 7251 / JCM 13017 / BCRC 16820 / KCTC 9966 / NRRL B-24157 / PYR-1) (Mycobacterium vanbaalenii).